Reading from the N-terminus, the 620-residue chain is Glutathione-regulated potassium-efflux system protein KefC (620 aa).

Helical transmembrane passes span 4–24 (HTLL…PIAV), 26–46 (LGLG…PWGL), 54–74 (SILH…GLEL), 90–110 (GALQ…FLGL), 114–134 (VAEL…MQAM), 149–169 (FAVL…IPLL), 178–198 (LGAF…VVLL), 218–238 (VFSA…EEVG), 270–290 (GLLL…GTLV), 294–314 (LRIL…LWLV), 327–347 (WFAV…GAAQ), and 359–379 (ALTL…MLLT). The RCK N-terminal domain occupies 399 to 518 (QPRVIVAGFG…AGVAMPERET (120 aa)). The segment at 599-620 (QGTAEGKHSGEAADEPEVKPSI) is disordered.

Belongs to the monovalent cation:proton antiporter 2 (CPA2) transporter (TC 2.A.37) family. KefC subfamily. As to quaternary structure, homodimer. Interacts with the regulatory subunit KefF.

It localises to the cell inner membrane. Pore-forming subunit of a potassium efflux system that confers protection against electrophiles. Catalyzes K(+)/H(+) antiport. The polypeptide is Glutathione-regulated potassium-efflux system protein KefC (Salmonella heidelberg (strain SL476)).